Consider the following 1058-residue polypeptide: Carbamoyl phosphate synthase large chain (1058 aa).

A carboxyphosphate synthetic domain region spans residues 1–401 (MPKRKDIQKI…SLLKACRSLE (401 aa)). Arginine 129, arginine 169, glycine 175, glycine 176, arginine 208, isoleucine 210, glutamate 215, glycine 241, isoleucine 242, histidine 243, glutamine 284, and glutamate 298 together coordinate ATP. The region spanning 133 to 327 (KQLMQELDQP…IAKLAAKIAV (195 aa)) is the ATP-grasp 1 domain. Residues glutamine 284, glutamate 298, and asparagine 300 each coordinate Mg(2+). Mn(2+) contacts are provided by glutamine 284, glutamate 298, and asparagine 300. Residues 402-546 (IGVCHNEMTS…YSTYELENES (145 aa)) form an oligomerization domain region. The tract at residues 547–929 (VQSNKESILV…ALYKAFEANN (383 aa)) is carbamoyl phosphate synthetic domain. The ATP-grasp 2 domain maps to 671–861 (EKALKELGIP…MAQIATKLIL (191 aa)). Residues arginine 707, serine 746, isoleucine 748, glutamate 752, glycine 777, valine 778, histidine 779, serine 780, glutamine 820, and glutamate 832 each contribute to the ATP site. 3 residues coordinate Mg(2+): glutamine 820, glutamate 832, and asparagine 834. Residues glutamine 820, glutamate 832, and asparagine 834 each contribute to the Mn(2+) site. An MGS-like domain is found at 930 to 1058 (SHLSEFGQIV…ESRCFNIEAI (129 aa)). The interval 930-1058 (SHLSEFGQIV…ESRCFNIEAI (129 aa)) is allosteric domain.

It belongs to the CarB family. In terms of assembly, composed of two chains; the small (or glutamine) chain promotes the hydrolysis of glutamine to ammonia, which is used by the large (or ammonia) chain to synthesize carbamoyl phosphate. Tetramer of heterodimers (alpha,beta)4. Requires Mg(2+) as cofactor. It depends on Mn(2+) as a cofactor.

The catalysed reaction is hydrogencarbonate + L-glutamine + 2 ATP + H2O = carbamoyl phosphate + L-glutamate + 2 ADP + phosphate + 2 H(+). The enzyme catalyses hydrogencarbonate + NH4(+) + 2 ATP = carbamoyl phosphate + 2 ADP + phosphate + 2 H(+). It functions in the pathway amino-acid biosynthesis; L-arginine biosynthesis; carbamoyl phosphate from bicarbonate: step 1/1. The protein operates within pyrimidine metabolism; UMP biosynthesis via de novo pathway; (S)-dihydroorotate from bicarbonate: step 1/3. Its function is as follows. Large subunit of the glutamine-dependent carbamoyl phosphate synthetase (CPSase). CPSase catalyzes the formation of carbamoyl phosphate from the ammonia moiety of glutamine, carbonate, and phosphate donated by ATP, constituting the first step of 2 biosynthetic pathways, one leading to arginine and/or urea and the other to pyrimidine nucleotides. The large subunit (synthetase) binds the substrates ammonia (free or transferred from glutamine from the small subunit), hydrogencarbonate and ATP and carries out an ATP-coupled ligase reaction, activating hydrogencarbonate by forming carboxy phosphate which reacts with ammonia to form carbamoyl phosphate. This chain is Carbamoyl phosphate synthase large chain, found in Streptococcus pyogenes serotype M49 (strain NZ131).